A 150-amino-acid polypeptide reads, in one-letter code: MEVILLDKIAKLGGLGDKVSVKSGYARNYLLPQGKAVFASEANVEHFEARRADIEAKLADVLATAEARAAKVVALAEVTIASKSGDEGKLFGSIGTRDIADAITEAGVEITKAEVRLPLGAIRETGEFEIAIHLHHDVDTSIKVVVIAEA.

It belongs to the bacterial ribosomal protein bL9 family.

In terms of biological role, binds to the 23S rRNA. The sequence is that of Large ribosomal subunit protein bL9 from Colwellia psychrerythraea (strain 34H / ATCC BAA-681) (Vibrio psychroerythus).